We begin with the raw amino-acid sequence, 472 residues long: Glycogen synthase (472 aa).

Lys16 lines the ADP-alpha-D-glucose pocket.

This sequence belongs to the glycosyltransferase 1 family. Bacterial/plant glycogen synthase subfamily.

It catalyses the reaction [(1-&gt;4)-alpha-D-glucosyl](n) + ADP-alpha-D-glucose = [(1-&gt;4)-alpha-D-glucosyl](n+1) + ADP + H(+). The protein operates within glycan biosynthesis; glycogen biosynthesis. In terms of biological role, synthesizes alpha-1,4-glucan chains using ADP-glucose. The polypeptide is Glycogen synthase (Jannaschia sp. (strain CCS1)).